The following is a 389-amino-acid chain: Probable zinc transporter zip2 (389 aa).

7 consecutive transmembrane segments (helical) span residues 6–26, 48–68, 88–108, 267–289, 305–325, 329–349, and 368–388; these read GWIL…GIYL, LVTG…ASVM, VFQF…NHFL, VLVA…LYLA, SCSL…GGIG, FLNF…LILS, and HSFI…IFDS.

This sequence belongs to the ZIP transporter (TC 2.A.5) family.

The protein localises to the endoplasmic reticulum membrane. In terms of biological role, probable zinc transporter that may mediate zinc remobilization from the endoplasmic reticulum under zinc limitation. This chain is Probable zinc transporter zip2 (zip2), found in Schizosaccharomyces pombe (strain 972 / ATCC 24843) (Fission yeast).